The chain runs to 89 residues: Small ribosomal subunit protein uS15 (89 aa).

It belongs to the universal ribosomal protein uS15 family. As to quaternary structure, part of the 30S ribosomal subunit. Forms a bridge to the 50S subunit in the 70S ribosome, contacting the 23S rRNA.

Its function is as follows. One of the primary rRNA binding proteins, it binds directly to 16S rRNA where it helps nucleate assembly of the platform of the 30S subunit by binding and bridging several RNA helices of the 16S rRNA. Functionally, forms an intersubunit bridge (bridge B4) with the 23S rRNA of the 50S subunit in the ribosome. This chain is Small ribosomal subunit protein uS15, found in Streptococcus thermophilus (strain CNRZ 1066).